The following is a 154-amino-acid chain: Protein X (154 aa).

Residues 68 to 117 (PCALRFTSARSMETTVNAHQVLPKVLHKRTLGLSAMSTTDLEAYFKDCLF) are mitochondrial targeting sequence.

The protein belongs to the orthohepadnavirus protein X family. As to quaternary structure, may form homodimer. May interact with host CEBPA, CFLAR, CREB1, DDB1, E4F1, HBXIP, HSPD1/HSP60, NFKBIA, POLR2E and SMAD4. Interacts with host SMC5-SMC6 complex and induces its degradation. Interacts with host TRPC4AP; leading to prevent ubiquitination of TRPC4AP. Interacts with host PLSCR1; this interaction promotes ubiquitination and degradation of HBx and impairs HBx-mediated cell proliferation. Post-translationally, a fraction may be phosphorylated in insect cells and HepG2 cells, a human hepatoblastoma cell line. Phosphorylated in vitro by host protein kinase C or mitogen-activated protein kinase. N-acetylated in insect cells.

It localises to the host cytoplasm. It is found in the host nucleus. Its subcellular location is the host mitochondrion. Its function is as follows. Multifunctional protein that plays a role in silencing host antiviral defenses and promoting viral transcription. Does not seem to be essential for HBV infection. May be directly involved in development of cirrhosis and liver cancer (hepatocellular carcinoma). Most of cytosolic activities involve modulation of cytosolic calcium. The effect on apoptosis is controversial depending on the cell types in which the studies have been conducted. May induce apoptosis by localizing in mitochondria and causing loss of mitochondrial membrane potential. May also modulate apoptosis by binding host CFLAR, a key regulator of the death-inducing signaling complex (DISC). Promotes viral transcription by using the host E3 ubiquitin ligase DDB1 to target the SMC5-SMC6 complex to proteasomal degradation. This host complex would otherwise bind to viral episomal DNA, and prevents its transcription. Moderately stimulates transcription of many different viral and cellular transcription elements. Promoters and enhancers stimulated by HBx contain DNA binding sites for NF-kappa-B, AP-1, AP-2, c-EBP, ATF/CREB, or the calcium-activated factor NF-AT. The sequence is that of Protein X from Homo sapiens (Human).